The sequence spans 338 residues: LINE-1 retrotransposable element ORF1 protein (338 aa).

The tract at residues 1 to 40 is disordered; that stretch reads MGKKQNRKTGNSKTQSASPPPKERSSSPATEQSWMENDFD. Polar residues-rich tracts occupy residues 8-17 and 26-35; these read KTGNSKTQSA and SSPATEQSWM. A coiled-coil region spans residues 49 to 153; it reads RSNYSELRED…QSLQEIWDYV (105 aa). The tract at residues 157 to 252 is RNA recognition motif (RRM) domain; that stretch reads NLRLIGVPES…KGKPIRLTAD (96 aa). Positions 253–317 are C-terminal domain (CTD); it reads LSAETLQARR…TTRPALKELL (65 aa).

The protein belongs to the transposase 22 family. As to quaternary structure, homotrimer (via coiled coil domain). May also form larger homooligomers. May interact with DDX39A, HNRNPA1, SERBP1 and YBX1. Interacts with TEX19 and UBR2. Interacts with MOV10. Interacts with APOBEC3D; this interaction inhibits LINE-1 retrotransposition. Polyubiquitinated, probably by UBR2, which induces its degradation.

The protein localises to the nucleus. It localises to the nucleolus. Its subcellular location is the cytoplasm. It is found in the cytoplasmic ribonucleoprotein granule. The protein resides in the stress granule. Its function is as follows. Nucleic acid-binding protein which is essential for retrotransposition of LINE-1 elements in the genome. Functions as a nucleic acid chaperone binding its own transcript and therefore preferentially mobilizing the transcript from which they are encoded. The sequence is that of LINE-1 retrotransposable element ORF1 protein (L1RE1) from Homo sapiens (Human).